The sequence spans 67 residues: Small ribosomal subunit protein eS27 (67 aa).

Zn(2+)-binding residues include C22, C25, C41, and C44. The segment at 22 to 44 (CPDCGNEQVVFSHAAMVVRCLVC) adopts a C4-type zinc-finger fold.

It belongs to the eukaryotic ribosomal protein eS27 family. In terms of assembly, part of the 30S ribosomal subunit. Zn(2+) is required as a cofactor.

This chain is Small ribosomal subunit protein eS27, found in Pyrobaculum islandicum (strain DSM 4184 / JCM 9189 / GEO3).